The following is a 249-amino-acid chain: Proteasome subunit alpha type-7-1 (249 aa).

Residue serine 177 is modified to Phosphoserine.

Belongs to the peptidase T1A family. As to quaternary structure, the 26S proteasome consists of a 20S proteasome core and two 19S regulatory subunits. The 20S proteasome core is composed of 28 subunits that are arranged in four stacked rings, resulting in a barrel-shaped structure. The two end rings are each formed by seven alpha subunits, and the two central rings are each formed by seven beta subunits. The catalytic chamber with the active sites is on the inside of the barrel. Interacts with PI31; this interaction is reduced by PI31 ADP-ribosylation.

Its subcellular location is the cytoplasm. It is found in the nucleus. The proteasome is a multicatalytic proteinase complex which is characterized by its ability to cleave peptides with Arg, Phe, Tyr, Leu, and Glu adjacent to the leaving group at neutral or slightly basic pH. The proteasome has an ATP-dependent proteolytic activity. This is Proteasome subunit alpha type-7-1 (Prosalpha4) from Drosophila melanogaster (Fruit fly).